Here is a 299-residue protein sequence, read N- to C-terminus: Glutamate formimidoyltransferase (299 aa).

The active-site For formimidoyltransferase activity is His-82. 163–172 (GDRKIHPTAG) lines the folate pocket.

It belongs to the formiminotransferase family.

The protein resides in the cytoplasm. The catalysed reaction is (6S)-5-formyl-5,6,7,8-tetrahydrofolate + L-glutamate = N-formyl-L-glutamate + (6S)-5,6,7,8-tetrahydrofolate + H(+). The enzyme catalyses 5-formimidoyltetrahydrofolate + L-glutamate = N-formimidoyl-L-glutamate + (6S)-5,6,7,8-tetrahydrofolate. It catalyses the reaction (6S)-5-formyl-5,6,7,8-tetrahydrofolate + ATP = (6R)-5,10-methenyltetrahydrofolate + ADP + phosphate. It participates in amino-acid degradation; L-histidine degradation into L-glutamate; L-glutamate from N-formimidoyl-L-glutamate (transferase route): step 1/1. It functions in the pathway one-carbon metabolism; tetrahydrofolate interconversion. Catalyzes the transfer of the formyl group from N-formylglutamate to tetrahydrofolate (THF) to yield 5-formyltetrahydrofolate (5-CHO-THF) and glutamate (Glu). The triglutamate form of 5-CHO-THF (5-CHO-THF-Glu3) can also be used as substrate. It can also catalyze the transfer of the formimino group from N-formiminoglutamate to tetrahydrofolate (THF) to yield 5-formiminotetrahydrofolate (5-NH=CH-THF) and glutamate (Glu). It can replace YgfA to catalyze the irreversible ATP-dependent transformation of 5-CHO-THF to form 5,10-methenyltetrahydrofolate (5,10-CH=THF). This Streptococcus pyogenes serotype M1 protein is Glutamate formimidoyltransferase.